The sequence spans 100 residues: NADH-quinone oxidoreductase subunit K (100 aa).

The next 3 membrane-spanning stretches (helical) occupy residues 2-22 (IPLS…VAGF), 28-48 (IIVM…NLVA), and 64-84 (FVIT…ICLF).

The protein belongs to the complex I subunit 4L family. NDH-1 is composed of 14 different subunits. Subunits NuoA, H, J, K, L, M, N constitute the membrane sector of the complex.

It localises to the cell inner membrane. The catalysed reaction is a quinone + NADH + 5 H(+)(in) = a quinol + NAD(+) + 4 H(+)(out). Its function is as follows. NDH-1 shuttles electrons from NADH, via FMN and iron-sulfur (Fe-S) centers, to quinones in the respiratory chain. The immediate electron acceptor for the enzyme in this species is believed to be ubiquinone. Couples the redox reaction to proton translocation (for every two electrons transferred, four hydrogen ions are translocated across the cytoplasmic membrane), and thus conserves the redox energy in a proton gradient. The polypeptide is NADH-quinone oxidoreductase subunit K (Desulfovibrio desulfuricans (strain ATCC 27774 / DSM 6949 / MB)).